A 246-amino-acid polypeptide reads, in one-letter code: Probable transcriptional regulatory protein AHA_1522 (246 aa).

It belongs to the TACO1 family.

Its subcellular location is the cytoplasm. This Aeromonas hydrophila subsp. hydrophila (strain ATCC 7966 / DSM 30187 / BCRC 13018 / CCUG 14551 / JCM 1027 / KCTC 2358 / NCIMB 9240 / NCTC 8049) protein is Probable transcriptional regulatory protein AHA_1522.